The sequence spans 423 residues: Glutamate-1-semialdehyde 2,1-aminomutase (423 aa).

The residue at position 259 (K259) is an N6-(pyridoxal phosphate)lysine.

The protein belongs to the class-III pyridoxal-phosphate-dependent aminotransferase family. HemL subfamily. Homodimer. The cofactor is pyridoxal 5'-phosphate.

The protein resides in the cytoplasm. The catalysed reaction is (S)-4-amino-5-oxopentanoate = 5-aminolevulinate. It participates in porphyrin-containing compound metabolism; protoporphyrin-IX biosynthesis; 5-aminolevulinate from L-glutamyl-tRNA(Glu): step 2/2. In Thermosipho melanesiensis (strain DSM 12029 / CIP 104789 / BI429), this protein is Glutamate-1-semialdehyde 2,1-aminomutase.